A 132-amino-acid polypeptide reads, in one-letter code: Glycine cleavage system H protein (132 aa).

The Lipoyl-binding domain occupies 24-106 (IATIGLSAHA…YEEGWFIKVR (83 aa)). Lys65 is subject to N6-lipoyllysine.

It belongs to the GcvH family. The glycine cleavage system is composed of four proteins: P, T, L and H. (R)-lipoate is required as a cofactor.

Functionally, the glycine cleavage system catalyzes the degradation of glycine. The H protein shuttles the methylamine group of glycine from the P protein to the T protein. The polypeptide is Glycine cleavage system H protein (Picosynechococcus sp. (strain ATCC 27264 / PCC 7002 / PR-6) (Agmenellum quadruplicatum)).